The following is a 192-amino-acid chain: Thymidine kinase (192 aa).

Residues 9–16 and 88–91 each bind ATP; these read SAMNAGKT and DECH. Residue Glu89 is the Proton acceptor of the active site. Zn(2+) is bound by residues Cys146, Cys148, Cys183, and His186.

Belongs to the thymidine kinase family. As to quaternary structure, homotetramer.

It is found in the cytoplasm. The enzyme catalyses thymidine + ATP = dTMP + ADP + H(+). This chain is Thymidine kinase, found in Blochmanniella floridana.